The chain runs to 210 residues: Probable GTP-binding protein EngB (210 aa).

The EngB-type G domain occupies 30-204 (QGYEVAFAGR…YRVLADWMEL (175 aa)). GTP contacts are provided by residues 38-45 (GRSNAGKS), 64-68 (GRTQL), 82-85 (DLPG), 149-152 (TKAD), and 182-185 (LFSA). Mg(2+)-binding residues include Ser45 and Thr66.

It belongs to the TRAFAC class TrmE-Era-EngA-EngB-Septin-like GTPase superfamily. EngB GTPase family. Mg(2+) serves as cofactor.

Functionally, necessary for normal cell division and for the maintenance of normal septation. This is Probable GTP-binding protein EngB from Pseudomonas putida (strain ATCC 47054 / DSM 6125 / CFBP 8728 / NCIMB 11950 / KT2440).